The sequence spans 370 residues: Calcium-binding protein 1 (370 aa).

The segment at 1–198 (MGGGDGAAFK…GRGDSVPAAA (198 aa)) is disordered. G2 carries the N-myristoyl glycine lipid modification. G4 carries S-palmitoyl cysteine lipidation. Low complexity-rich tracts occupy residues 50–61 (HASAGPAAMSSH), 68–84 (KTSLLKAAAAAASGGSR), and 148–157 (ALPAAASRPS). 4 EF-hand domains span residues 225–260 (EEIEELREAFREFDKDKDGYINCRDLGNCMRTMGYM), 279–296 (GHVDFDDFVELMGPKLLA), 302–337 (IGVKELRDAFREFDTNGDGEISTSELREAMRKLLGH), and 339–370 (VGHRDIEEIIRDVDLNGDGRVDFEEFVRMMSR). Residues D238, D240, D242, Y244, and D249 each coordinate Ca(2+). Positions 238, 240, 242, and 244 each coordinate Mg(2+). The Ca(2+) site is built by D315, N317, D319, and E321. S323 is modified (phosphoserine). Residues E326, D352, L353, N354, D356, G357, R358, D360, and E363 each contribute to the Ca(2+) site.

Homodimer; when bound to calcium or magnesium. Interacts (via C-terminus) with ITPR1, ITPR2 and ITPR3. This binding is calcium dependent and the interaction correlates with calcium concentration. An additional calcium-independent interaction with the N-terminus of ITPR1 results in a decreased InsP(3) binding to the receptor. Interacts with CACNA1A (via C-terminal CDB motif) in the pre- and postsynaptic membranes. Interacts with CACNA1C (via C-terminal C and IQ motifs). The binding to the C motif is calcium independent whereas the binding to IQ requires the presence of calcium and is mutually exclusive with calmodulin binding. Interacts with CACNA1D. Interacts with TRPC5 (via C-terminus). Interacts (via EF-hands 1 and 2) at microtubules with MAP1LC3B. Interacts with MYO1C. Interacts (via EF-hands 1 and 2) with NSMF (via the central NLS-containing motif region), the interaction occurs in a calcium dependent manner after synaptic NMDA receptor stimulation and prevents nuclear import of NSMF. Interacts with SPACA9. In terms of processing, phosphorylated. The phosphorylation regulates the activity. Retina and brain. Somatodendritic compartment of neurons. Calbrain was found exclusively in brain where it is abundant in the hippocampus, habenular area in the epithalamus and in the cerebellum.

Its subcellular location is the cytoplasm. It is found in the cytoskeleton. The protein resides in the perinuclear region. It localises to the cell membrane. The protein localises to the golgi apparatus. Its subcellular location is the postsynaptic density. It is found in the cell cortex. Modulates calcium-dependent activity of inositol 1,4,5-triphosphate receptors (ITPRs). Inhibits agonist-induced intracellular calcium signaling. Enhances inactivation and does not support calcium-dependent facilitation of voltage-dependent P/Q-type calcium channels. Causes calcium-dependent facilitation and inhibits inactivation of L-type calcium channels by binding to the same sites as calmodulin in the C-terminal domain of CACNA1C, but has an opposite effect on channel function. Suppresses the calcium-dependent inactivation of CACNA1D. Inhibits TRPC5 channels. Prevents NMDA receptor-induced cellular degeneration. Required for the normal transfer of light signals through the retina. This chain is Calcium-binding protein 1 (CABP1), found in Homo sapiens (Human).